A 697-amino-acid chain; its full sequence is Elongation factor G (697 aa).

The 276-residue stretch at 10-285 (ERTRNIGIMA…AVVDYLPSPL (276 aa)) folds into the tr-type G domain. GTP-binding positions include 19-26 (AHIDAGKT), 83-87 (DTPGH), and 137-140 (NKMD).

It belongs to the TRAFAC class translation factor GTPase superfamily. Classic translation factor GTPase family. EF-G/EF-2 subfamily.

Its subcellular location is the cytoplasm. In terms of biological role, catalyzes the GTP-dependent ribosomal translocation step during translation elongation. During this step, the ribosome changes from the pre-translocational (PRE) to the post-translocational (POST) state as the newly formed A-site-bound peptidyl-tRNA and P-site-bound deacylated tRNA move to the P and E sites, respectively. Catalyzes the coordinated movement of the two tRNA molecules, the mRNA and conformational changes in the ribosome. The chain is Elongation factor G from Pediococcus pentosaceus (strain ATCC 25745 / CCUG 21536 / LMG 10740 / 183-1w).